We begin with the raw amino-acid sequence, 217 residues long: GRB2-related adapter protein (217 aa).

An SH3 1 domain is found at 1–58; the sequence is MESVALYSFQATESDELAFNKGDTLKILNMEDDQNWYKAELRGAEGFVPKNYIRLKPH. Positions 60 to 152 constitute an SH2 domain; sequence WYSGRISRQL…KRQVFLQDEE (93 aa). The SH3 2 domain occupies 158–217; sequence PRACFAQAQFDFSAQDPSQLSFRRGDIIEVLERLDPSWWRGRLSGRIGFFPRSYVQPVHM.

This sequence belongs to the GRB2/sem-5/DRK family. Associates through its SH2 domain with ligand-activated receptors for stem cell factor (KIT) and erythropoietin (EPOR). Also forms a stable complex with the Bcr-Abl oncoprotein. GRAP is associated with the Ras guanine nucleotide exchange factor SOS1, primarily through its N-terminal SH3 domain. Interacts with phosphorylated LAT upon TCR activation. Interacts with SHB.

The protein localises to the membrane. It is found in the synapse. Couples signals from receptor and cytoplasmic tyrosine kinases to the Ras signaling pathway. Plays a role in the inner ear and in hearing. The chain is GRB2-related adapter protein (GRAP) from Bos taurus (Bovine).